A 286-amino-acid chain; its full sequence is MNQDTLHRYLFDNADVRGELVQLQDSYQQVISAQEYPAVLQVLLGELMAATSLLTATLKFSGDISVQLQGNGPVSLAVINGNNLQELRGVARWNAELADDASLTDLFGQGYMVITLTPDEGERYQGVVALDKPTLAACVEEYFNQSEQLPTGIWLFADGKQAAGMFLQILPSKEDHNPDFEHLSQLTSTIKAEELFTLDAESVLHRLYHQEEVRLFDPIDVSFKCTCSHERSAGAIKTLDQAEIEAILAEDGKIEMGCEYCHAKYIFDAIDVAALFANGQTSTTQQ.

Cystine bridges form between Cys-225–Cys-227 and Cys-258–Cys-261.

The protein belongs to the HSP33 family. In terms of processing, under oxidizing conditions two disulfide bonds are formed involving the reactive cysteines. Under reducing conditions zinc is bound to the reactive cysteines and the protein is inactive.

Its subcellular location is the cytoplasm. In terms of biological role, redox regulated molecular chaperone. Protects both thermally unfolding and oxidatively damaged proteins from irreversible aggregation. Plays an important role in the bacterial defense system toward oxidative stress. The chain is 33 kDa chaperonin from Shewanella baltica (strain OS223).